The following is a 37-amino-acid chain: uncharacterized protein (37 aa).

The N-terminal stretch at 1 to 23 (MLNFSLCLYPVFILNKLVLRTQS) is a signal peptide.

This sequence belongs to the orthopoxviruses VACWR204.5 protein family.

This is an uncharacterized protein from Vaccinia virus (strain Western Reserve) (VACV).